The following is a 515-amino-acid chain: MRTGKQYLESLNDGRVVWVGNEKIDNVATHPLTRDYAERVAQFYDLHHRPDLQDVLTFVDADGVRRSRQWQDPKDAAGLRVKRKYHETILREIAAGSYGRLPDAHNYTFTTYADDPEVWEKQSIGAEGRNLTQNIHNFLKLLREKDLNCPLNFVDPQTDRSSDAAQARSPNLRIVEKTDDGIIVNGVKAVGTGIAFGDYMHIGCLYRPGIPGEQVIFAAIPTNTPGVTVFCRESTVKNDPAEHPLASQGDELDSTTVFDNVFIPWEQVFHIGNPEHAKLYPQRIFDWVHYHILIRQVLRAELIVGLAILITEHIGTSKLPTVSARVAKLVAFHLAMQAHLIASEETGFHTKGGRYKPNPLIYDFGRAHFLQNQMSVMYELLDLAGRSSLMIPSEGQWDDSQSGQWFVKLNNGPKGNPRERVQIGRVIRDLYLTDWGGRQFMFENFNGTPLFAVFAATMTRDDMSAAGTYGKFASQVCGIEFGGAEPTAYAATADYAKALDKGLAPEPAAAESATS.

Substrate is bound at residue 100–104 (RLPDA). FAD is bound by residues 151–153 (LNF), 157–160 (QTDR), and Thr-192. 203–204 (GC) lines the substrate pocket. 457 to 460 (TMTR) is an FAD binding site.

The protein belongs to the FADH(2)-utilizing monooxygenase family. In terms of assembly, homotetramer. The chlorophenol-4-monooxygenase is composed of an oxygenase component TftD and a reductase component TftC.

Its pathway is xenobiotic degradation. Functionally, oxygenase component of a two-component system that degrades 2,4,5-trichlorophenol. Uses FADH(2) supplied by TftC to oxidize 2,4,5-trichlorophenol (2,4,5-TCP) to 2,5-dichloro-p-benzoquinone, which is chemically reduced to 2,5-dichloro-p-hydroquinone (2,5-DiCHQ). Then, TftD oxidizes the latter to 5-chloro-2-hydroxy-p-benzoquinone. The polypeptide is FADH(2)-dependent monooxygenase TftD (tftD) (Burkholderia cepacia (Pseudomonas cepacia)).